The primary structure comprises 100 residues: Small ribosomal subunit protein uS14c (100 aa).

Belongs to the universal ribosomal protein uS14 family. In terms of assembly, part of the 30S ribosomal subunit.

Its subcellular location is the plastid. It is found in the chloroplast. Binds 16S rRNA, required for the assembly of 30S particles. The sequence is that of Small ribosomal subunit protein uS14c from Staurastrum punctulatum (Green alga).